The sequence spans 561 residues: Urocanate hydratase (561 aa).

NAD(+) contacts are provided by residues 52–53 (GG), Q130, 176–178 (GMG), E196, R201, 242–243 (NA), 263–267 (QTSAH), 273–274 (YL), and Y322. The active site involves C410. G492 serves as a coordination point for NAD(+).

Belongs to the urocanase family. Requires NAD(+) as cofactor.

The protein resides in the cytoplasm. The enzyme catalyses 4-imidazolone-5-propanoate = trans-urocanate + H2O. It participates in amino-acid degradation; L-histidine degradation into L-glutamate; N-formimidoyl-L-glutamate from L-histidine: step 2/3. Its function is as follows. Catalyzes the conversion of urocanate to 4-imidazolone-5-propionate. The polypeptide is Urocanate hydratase (Salmonella typhi).